We begin with the raw amino-acid sequence, 208 residues long: Thymidylate kinase (208 aa).

10–17 contributes to the ATP binding site; it reads GGEGVGKS.

Belongs to the thymidylate kinase family.

The enzyme catalyses dTMP + ATP = dTDP + ADP. Phosphorylation of dTMP to form dTDP in both de novo and salvage pathways of dTTP synthesis. This is Thymidylate kinase from Rhizorhabdus wittichii (strain DSM 6014 / CCUG 31198 / JCM 15750 / NBRC 105917 / EY 4224 / RW1) (Sphingomonas wittichii).